A 326-amino-acid chain; its full sequence is MASSRVILALLLAAAAVMASSAQLDEKFYSNSCPSVEAVVRKEMVRALGAAPSLAGPLLRMHFHDCFVRGCDGSVLLDSAGNSTAEKDATPNQTLRGFGFVERVKAAVEKACPGTVSCADVLALMARDAVWLSKGPFWAVPLGRRDGRVSIANETDQLPPPTANFTELTQMFAAKNLDLKDLVVLSAGHTIGTSHCFSFTDRLYNFTGLDNAHDIDPTLELQYMARLRSKCTSLQDNTTLVEMDPGSFKTFDLGYFKNVAKRRGLFHSDGELLTNGFTRAYVQRHAGGGYKDEFFADFAASMVKMGGVEVLTGSQGEIRKKCNVVN.

Positions 1–22 are cleaved as a signal peptide; it reads MASSRVILALLLAAAAVMASSA. At Q23 the chain carries Pyrrolidone carboxylic acid. 4 disulfides stabilise this stretch: C33/C112, C66/C71, C118/C322, and C196/C231. H64 functions as the Proton acceptor in the catalytic mechanism. Residues D65, V68, G70, D72, and S74 each coordinate Ca(2+). 2 N-linked (GlcNAc...) asparagine glycosylation sites follow: N82 and N153. Residue P159 participates in substrate binding. A glycan (N-linked (GlcNAc...) asparagine) is linked at N164. H189 lines the heme b pocket. T190 contacts Ca(2+). 2 N-linked (GlcNAc...) asparagine glycosylation sites follow: N205 and N237. Residues D244, S247, and D252 each contribute to the Ca(2+) site.

It belongs to the peroxidase family. Classical plant (class III) peroxidase subfamily. Ca(2+) serves as cofactor. It depends on heme b as a cofactor.

It is found in the secreted. The catalysed reaction is 2 a phenolic donor + H2O2 = 2 a phenolic radical donor + 2 H2O. Functionally, removal of H(2)O(2), oxidation of toxic reductants, biosynthesis and degradation of lignin, suberization, auxin catabolism, response to environmental stresses such as wounding, pathogen attack and oxidative stress. These functions might be dependent on each isozyme/isoform in each plant tissue. The protein is Peroxidase 1 (PRX74) of Oryza sativa subsp. japonica (Rice).